The chain runs to 422 residues: L-threonine dehydratase biosynthetic IlvA (422 aa).

Lys-60 carries the post-translational modification N6-(pyridoxal phosphate)lysine. Pyridoxal 5'-phosphate contacts are provided by residues Asn-87, 190-194 (GGGGL), and Ser-315. In terms of domain architecture, ACT-like spans 339 to 413 (HYFIVNFPQR…KPFHYVEVNK (75 aa)).

This sequence belongs to the serine/threonine dehydratase family. Homotetramer. Pyridoxal 5'-phosphate is required as a cofactor.

The enzyme catalyses L-threonine = 2-oxobutanoate + NH4(+). Its pathway is amino-acid biosynthesis; L-isoleucine biosynthesis; 2-oxobutanoate from L-threonine: step 1/1. In terms of biological role, catalyzes the anaerobic formation of alpha-ketobutyrate and ammonia from threonine in a two-step reaction. The first step involved a dehydration of threonine and a production of enamine intermediates (aminocrotonate), which tautomerizes to its imine form (iminobutyrate). Both intermediates are unstable and short-lived. The second step is the nonenzymatic hydrolysis of the enamine/imine intermediates to form 2-ketobutyrate and free ammonia. In the low water environment of the cell, the second step is accelerated by RidA. This chain is L-threonine dehydratase biosynthetic IlvA (ilvA), found in Bacillus subtilis (strain 168).